We begin with the raw amino-acid sequence, 392 residues long: Alanine--glyoxylate aminotransferase (392 aa).

A Phosphothreonine modification is found at T9. Position 209 is an N6-(pyridoxal phosphate)lysine (K209). K225 bears the N6-acetyllysine; alternate mark. K225 bears the N6-succinyllysine; alternate mark. N6-acetyllysine is present on residues K234 and K312. R360 lines the substrate pocket.

Belongs to the class-V pyridoxal-phosphate-dependent aminotransferase family. As to quaternary structure, homodimer. Requires pyridoxal 5'-phosphate as cofactor. As to expression, liver.

The protein localises to the peroxisome. It catalyses the reaction L-serine + pyruvate = 3-hydroxypyruvate + L-alanine. The enzyme catalyses glyoxylate + L-alanine = glycine + pyruvate. With respect to regulation, alanine--glyoxylate aminotransferase activity is inhibited by 1 mM (aminooxy)acetic acid by 97.5%. Functionally, peroxisomal aminotransferase that catalyzes the transamination of glyoxylate to glycine and contributes to the glyoxylate detoxification. Also catalyzes the transamination between L-serine and pyruvate and contributes to gluconeogenesis from the L-serine metabolism. This Homo sapiens (Human) protein is Alanine--glyoxylate aminotransferase.